The chain runs to 329 residues: DNA-directed RNA polymerase subunit alpha (329 aa).

The tract at residues 1 to 235 is alpha N-terminal domain (alpha-NTD); that stretch reads MQGSVTEFLK…EQLEAFVDLR (235 aa). The alpha C-terminal domain (alpha-CTD) stretch occupies residues 249 to 329; the sequence is FDPILLRPVD…NWPPASIADE (81 aa).

This sequence belongs to the RNA polymerase alpha chain family. As to quaternary structure, homodimer. The RNAP catalytic core consists of 2 alpha, 1 beta, 1 beta' and 1 omega subunit. When a sigma factor is associated with the core the holoenzyme is formed, which can initiate transcription.

The enzyme catalyses RNA(n) + a ribonucleoside 5'-triphosphate = RNA(n+1) + diphosphate. Functionally, DNA-dependent RNA polymerase catalyzes the transcription of DNA into RNA using the four ribonucleoside triphosphates as substrates. This Yersinia pestis bv. Antiqua (strain Antiqua) protein is DNA-directed RNA polymerase subunit alpha.